The chain runs to 94 residues: MNIYSIIKKPHVTEKTSLGTEAANTITLVVDRDSNKIEIKKAVESLFKVNVTSVRTVNVAGKVKRFGRNYGKRQNWKKAYITLKEGQTVDFFEV.

The protein belongs to the universal ribosomal protein uL23 family. In terms of assembly, part of the 50S ribosomal subunit. Contacts protein L29, and trigger factor when it is bound to the ribosome.

Its function is as follows. One of the early assembly proteins it binds 23S rRNA. One of the proteins that surrounds the polypeptide exit tunnel on the outside of the ribosome. Forms the main docking site for trigger factor binding to the ribosome. This is Large ribosomal subunit protein uL23 from Trichlorobacter lovleyi (strain ATCC BAA-1151 / DSM 17278 / SZ) (Geobacter lovleyi).